Reading from the N-terminus, the 541-residue chain is MDTQRNILLLALALVSFLLFQQWQVETNPQQPATVSTVQQTHKNGDVPTSSTANSDAPVDSAQSDKLITITTDVLTLKVDTLGGDIIESVLNKYDAELDSKAKFVLLKNDADHSYIAQSGLIGPQGIDSNTGRAQFTAKKTDYVLADGQNELRIPLTLEKNGITYTKTLIVKRDSYAIDVEYTVNNQSSAPATVEMYANLKQNLLDDGGSLTMPTYRGGAYSTEDTRYKKYSFDDMEDKNLSIDMTNGQGWAGMLQHYFASAWIPRNVNDATLTTRVAGDYGYIGVRMPSVTIPAGQEDTLTATLWTGPKLQPQMAATAKYLDLSVDYGWLWFIASPLHKLLSFIQSIVGNWGLAIMILTFIVRGAMYPLTKAQYTSMAKMRMLQPKLAAMRERIGDDRQRMSQEMMELYKKEKVNPLGGCLPIVLQMPIFISLYWALMESVELRHAPFFGWITDLSAQDPYYILPLLMGASMFLIQKMSPTTVTDPMQQKIMTFIPVMFTVFFLWFPAGLVLYWLVSNVVTLIQQTLIYRALEKKGLHSK.

Residues 7–27 (ILLLALALVSFLLFQQWQVET) traverse the membrane as a helical segment. Residues 34 to 55 (TVSTVQQTHKNGDVPTSSTANS) show a composition bias toward polar residues. The segment at 34–59 (TVSTVQQTHKNGDVPTSSTANSDAPV) is disordered. 4 helical membrane-spanning segments follow: residues 343 to 363 (SFIQ…TFIV), 418 to 438 (LGGC…YWAL), 456 to 476 (LSAQ…MFLI), and 495 to 515 (FIPV…VLYW).

The protein belongs to the OXA1/ALB3/YidC family. Type 1 subfamily. As to quaternary structure, interacts with the Sec translocase complex via SecD. Specifically interacts with transmembrane segments of nascent integral membrane proteins during membrane integration.

The protein localises to the cell inner membrane. Its function is as follows. Required for the insertion and/or proper folding and/or complex formation of integral membrane proteins into the membrane. Involved in integration of membrane proteins that insert both dependently and independently of the Sec translocase complex, as well as at least some lipoproteins. Aids folding of multispanning membrane proteins. The sequence is that of Membrane protein insertase YidC from Aliivibrio salmonicida (strain LFI1238) (Vibrio salmonicida (strain LFI1238)).